The chain runs to 695 residues: Transketolase (695 aa).

H37 contacts substrate. Residues H77 and 126–128 (GPL) contribute to the thiamine diphosphate site. D164 contacts Mg(2+). Residues G165 and N194 each contribute to the thiamine diphosphate site. The Mg(2+) site is built by N194 and I196. H268, R361, and S388 together coordinate substrate. Residue H268 participates in thiamine diphosphate binding. Catalysis depends on E415, which acts as the Proton donor. F441 is a binding site for thiamine diphosphate. Positions 465, 473, and 524 each coordinate substrate.

The protein belongs to the transketolase family. As to quaternary structure, homodimer. Mg(2+) serves as cofactor. Ca(2+) is required as a cofactor. It depends on Mn(2+) as a cofactor. Requires Co(2+) as cofactor. The cofactor is thiamine diphosphate.

The catalysed reaction is D-sedoheptulose 7-phosphate + D-glyceraldehyde 3-phosphate = aldehydo-D-ribose 5-phosphate + D-xylulose 5-phosphate. The protein operates within carbohydrate biosynthesis; Calvin cycle. In terms of biological role, catalyzes the transfer of a two-carbon ketol group from a ketose donor to an aldose acceptor, via a covalent intermediate with the cofactor thiamine pyrophosphate. The protein is Transketolase (cbbT) of Sinorhizobium medicae (strain WSM419) (Ensifer medicae).